We begin with the raw amino-acid sequence, 96 residues long: UPF0235 protein NT01EI_0281 (96 aa).

Belongs to the UPF0235 family.

This chain is UPF0235 protein NT01EI_0281, found in Edwardsiella ictaluri (strain 93-146).